Here is a 111-residue protein sequence, read N- to C-terminus: MVAAKKTKKSTDNINNKLQLVMKSGKYTLGYKTVLRTLRNSKAKLVIISNNCPPLRKSEIEYYAMLAKVTVHHFHGNNVDLGTACGKYFRVCCLSIIDPGDSDIIKTTGEQ.

It belongs to the eukaryotic ribosomal protein eL30 family.

The sequence is that of Large ribosomal subunit protein eL30 (RPL30) from Oryza sativa subsp. japonica (Rice).